Here is a 7763-residue protein sequence, read N- to C-terminus: Nonribosomal peptide synthetase agiA (7763 aa).

The segment at 20–168 (APSVMQEEMI…DGWSARALLE (149 aa)) is condensation 1. Residues 469-866 (EQAASKWPSK…GRADGQIKLR (398 aa)) form an adenylation 1 region. The 77-residue stretch at 995 to 1071 (LPESPAERLL…DVARAMSPSS (77 aa)) folds into the Carrier 1 domain. Position 1032 is an O-(pantetheine 4'-phosphoryl)serine (serine 1032). The segment at 1104–1526 (IYPCTPQQEG…GLSDQKLITG (423 aa)) is condensation 2. Positions 1562-1968 (FEMQADMTPQ…GRIDSQIKLR (407 aa)) are adenylation 2. The Carrier 2 domain occupies 2090–2166 (WEQGSIEDKI…SQAKCATSHT (77 aa)). Serine 2127 carries the post-translational modification O-(pantetheine 4'-phosphoryl)serine. The tract at residues 2212 to 2556 (DHFNQSVLLD…IMPLVFNYQG (345 aa)) is epimerase (E). Residues 2676–3016 (DIIPCTPMQR…PALVNTLLNF (341 aa)) form a condensation 3 region. Positions 3136 to 3531 (WAAQVPEKVA…GRMDDQIKIR (396 aa)) are adenylation 3. In terms of domain architecture, Carrier 3 spans 3667-3743 (GPESPTEIML…ELATILNTSY (77 aa)). An O-(pantetheine 4'-phosphoryl)serine modification is found at serine 3704. The tract at residues 3789–4238 (VMPCTPFQEG…ISQSIDALVQ (450 aa)) is condensation 4. The segment at 4321–4687 (VGSQQPIIPI…GRFDRQIKIR (367 aa)) is adenylation 4. A Carrier 4 domain is found at 4806-4880 (APTTEREKVI…DLARQLESTA (75 aa)). O-(pantetheine 4'-phosphoryl)serine is present on serine 4840. Residues 4902-5339 (SFAQGRLWFL…ALLNDLSMHD (438 aa)) form a condensation 5 region. Residues 5361 to 5765 (FRQEARSHPD…GRRDDQVKIR (405 aa)) are adenylation 5. The interval 5820–5975 (DAWKNVFDTE…YLSEIVQKLV (156 aa)) is S-adenosyl-L-methionine-dependent N-methyltransferase. The Carrier 5 domain occupies 6306 to 6381 (EYGSEMERIL…RLADRLLSKQ (76 aa)). An O-(pantetheine 4'-phosphoryl)serine modification is found at serine 6341. Positions 6378-6399 (LSKQSDSNTEANTSTDGKTQHS) are disordered. The span at 6379 to 6399 (SKQSDSNTEANTSTDGKTQHS) shows a compositional bias: polar residues. The condensation 6 stretch occupies residues 6424-6883 (MPCTPFQEGV…TVGDAEEAAL (460 aa)). An adenylation 6 region spans residues 6913–7327 (RQAMESPCKI…GRMDSQVKLR (415 aa)). The Carrier 6 domain occupies 7446–7522 (PSPGTLEATL…SQAFRILCDV (77 aa)). Serine 7483 is modified (O-(pantetheine 4'-phosphoryl)serine). Residues 7542–7638 (TMVLIHPFFG…TGKGSPFSTV (97 aa)) form a thioesterase (TE) region.

This sequence belongs to the NRP synthetase family.

In terms of biological role, nonribosomal peptide synthetase; part of the gene cluster that mediates the biosynthesis of the aspergillicins A and F, 2 cryptic cyclic hexa-depsipeptides. The hexamodular NRPS agiA catalyzes the condensation of the six amino acid residues including N-Me-L-O-Me-tyrosine, L-proline 1, L-proline 2, D-isoleucine, O-acetyl-threonine, and L-isoleucine. The starting condensation domain (C1) of agiA probably loads acetyl-CoA which is condensed on the N-terminus of threonine by the first module to yield O-acetyl-threonine. The second module then loads L-isoleucine. The epimerase (E) domain on module 2 is probably involved in the formation of the D-isoleucine moiety. Modules 3 and 4 further load 2 successive L-prolines. Module 5 is then involved in the condensation of O-Me-L-tyrosine produced by the O-methyltransferase agiB and the N-methyl transferase (NMeT) domain on module 5 probably catalyzes the N-methylation to yield the N-Me-L-O-Me-tyrosine moiety. The A domain of module 5 loads preferentially O-Me-L-tyrosine, but it can also accept L-phenylalanine, which leads to the production of aspergillicin G. Module 6 then loads the last residue, L-isoleucine. The C-terminal thiolesterase (TE) domain probably cyclizes the peptide using the hydroxy group from threonine to form the cyclic depsipeptide. The chain is Nonribosomal peptide synthetase agiA from Aspergillus flavus (strain ATCC 200026 / FGSC A1120 / IAM 13836 / NRRL 3357 / JCM 12722 / SRRC 167).